Consider the following 327-residue polypeptide: RNA ligase 1 (327 aa).

Requires Mg(2+) as cofactor. It depends on Mn(2+) as a cofactor. AMPylates itself (auto-AMPylation).

It carries out the reaction ATP + (ribonucleotide)n-3'-hydroxyl + 5'-phospho-(ribonucleotide)m = (ribonucleotide)n+m + AMP + diphosphate.. In terms of biological role, functions as an RNA ligase, in vitro. The ligation reaction entails three nucleotidyl transfer steps. In the first step, the RNA ligase reacts with ATP in the absence of nucleic acid to form a covalent ligase-AMP intermediate and release pyrophosphate. In step 2, the ligase-AMP binds to the nucleic acid and transfers the adenylate to the 5'-PO4 terminus to form an adenylylated intermediate. In step 3, the RNA ligase directs the attack of the 3'-OH on the 5'-phosphoanhydride linkage, resulting in a repaired 3'-5' phosphodiester and release of AMP. Exhibits selectivity for single-stranded RNA substrates and may not have nick-sealing activity on double-stranded DNA-RNA hybrids. May play a role in maintaining RNA integrity under stress conditions, for example in response to reactive oxygen species (ROS). This is RNA ligase 1 from Mus musculus (Mouse).